The chain runs to 199 residues: GTP cyclohydrolase 1 (199 aa).

3 residues coordinate Zn(2+): C89, H92, and C161.

It belongs to the GTP cyclohydrolase I family. As to quaternary structure, homomer.

The catalysed reaction is GTP + H2O = 7,8-dihydroneopterin 3'-triphosphate + formate + H(+). The protein operates within cofactor biosynthesis; 7,8-dihydroneopterin triphosphate biosynthesis; 7,8-dihydroneopterin triphosphate from GTP: step 1/1. This chain is GTP cyclohydrolase 1, found in Bifidobacterium longum (strain DJO10A).